The chain runs to 242 residues: MKINILTLFPDMFTPLQVSMLGRGLEDGKWDLNLVNFRDFTTDLHHHVDDTPYGGGAGMVLQIMPIKKALDSLPSTGKIIITAPQGKTFNEKMAQEWAKEDELTFICGHYEGFDQRVYDLADETVSIGDYVLTGGELPTMSMVDATVRLLPGILGNSASSVEESFSHGLLEYPQYTRPADFEGKKSARSFKPVVIIKRLLNGDTIRLLKATYLHRPDMLENRNLSDEEKKMLQEIKNEMNED.

S-adenosyl-L-methionine contacts are provided by residues Gly108 and Ile127–Leu132.

It belongs to the RNA methyltransferase TrmD family. As to quaternary structure, homodimer.

It localises to the cytoplasm. It catalyses the reaction guanosine(37) in tRNA + S-adenosyl-L-methionine = N(1)-methylguanosine(37) in tRNA + S-adenosyl-L-homocysteine + H(+). Specifically methylates guanosine-37 in various tRNAs. The protein is tRNA (guanine-N(1)-)-methyltransferase of Lactobacillus acidophilus (strain ATCC 700396 / NCK56 / N2 / NCFM).